The chain runs to 303 residues: MSLSKVKHIVLVLSGKGGVGKSSVTTQLALSLSQAGHSVGVLDVDLTGPSIPRMFGIEDAKVTQAPGGWLPITVHEADPSTGIGSLRVMSLGFLLPRRGDAVVWRGPKKTAMVRQFLSDVFWDELDYLLIDTPPGTSDEHISLAETLLQKAHPEQLAGAVVVTTPQAVATADVRKELNFCTKTGIRVLGVVENMSGFVCPNCSECTNIFMSGGGEVMAKDFNVRFLGRIPIDPQFLVLIETGKSPRYPEGTSVNGQDISSATQVAANGDETRDSRLLVYKYKSCSLAPIFGPITADIIADVTR.

Residue 15–22 (GKGGVGKS) participates in ATP binding. Residues cysteine 199 and cysteine 202 each coordinate [4Fe-4S] cluster.

It belongs to the Mrp/NBP35 ATP-binding proteins family. NUBP2/CFD1 subfamily. In terms of assembly, heterotetramer of 2 NBP35 and 2 CFD1 chains. Requires [4Fe-4S] cluster as cofactor.

Its subcellular location is the cytoplasm. Component of the cytosolic iron-sulfur (Fe/S) protein assembly (CIA) machinery. Required for maturation of extramitochondrial Fe-S proteins. The NBP35-CFD1 heterotetramer forms a Fe-S scaffold complex, mediating the de novo assembly of an Fe-S cluster and its transfer to target apoproteins. The sequence is that of Cytosolic Fe-S cluster assembly factor CFD1 from Chaetomium globosum (strain ATCC 6205 / CBS 148.51 / DSM 1962 / NBRC 6347 / NRRL 1970) (Soil fungus).